We begin with the raw amino-acid sequence, 100 residues long: Nucleoid-associated protein MYPU_0500 (100 aa).

This sequence belongs to the YbaB/EbfC family. In terms of assembly, homodimer.

It is found in the cytoplasm. The protein resides in the nucleoid. Functionally, binds to DNA and alters its conformation. May be involved in regulation of gene expression, nucleoid organization and DNA protection. In Mycoplasmopsis pulmonis (strain UAB CTIP) (Mycoplasma pulmonis), this protein is Nucleoid-associated protein MYPU_0500.